The primary structure comprises 199 residues: Outer-membrane lipoprotein LolB (199 aa).

A signal peptide spans 1 to 28 (MSACPAPRSPFRWLHAFTLCLLLAVLAG). The N-palmitoyl cysteine moiety is linked to residue Cys29. Cys29 is lipidated: S-diacylglycerol cysteine.

It belongs to the LolB family. As to quaternary structure, monomer.

The protein localises to the cell outer membrane. In terms of biological role, plays a critical role in the incorporation of lipoproteins in the outer membrane after they are released by the LolA protein. This is Outer-membrane lipoprotein LolB from Bordetella bronchiseptica (strain ATCC BAA-588 / NCTC 13252 / RB50) (Alcaligenes bronchisepticus).